Consider the following 112-residue polypeptide: SRA stem-loop-interacting RNA-binding protein, mitochondrial (112 aa).

Ser-15 bears the Phosphoserine mark. An RRM domain is found at 19 to 98 (PIAFVRKIPW…IHVQAQRAKA (80 aa)). Residue Thr-104 is modified to Phosphothreonine. Phosphoserine is present on Ser-105.

It is found in the mitochondrion. It localises to the nucleus. Its function is as follows. RNA-binding protein that acts as a nuclear receptor corepressor. Probably acts by binding the SRA RNA, and repressing the SRA-mediated nuclear receptor coactivation. Binds the STR7 loop of SRA RNA. Also able to repress glucocorticoid (GR), androgen (AR), thyroid (TR) and VDR-mediated transactivation. In Mus musculus (Mouse), this protein is SRA stem-loop-interacting RNA-binding protein, mitochondrial (Slirp).